Here is a 265-residue protein sequence, read N- to C-terminus: Speedy protein E8 (265 aa).

The interval 1 to 80 is disordered; the sequence is MGQILGKIMM…EPEKELAPEP (80 aa). Over residues 66–80 the composition is skewed to acidic residues; it reads DESDDEPEKELAPEP.

Belongs to the Speedy/Ringo family.

The polypeptide is Speedy protein E8 (Homo sapiens (Human)).